Consider the following 50-residue polypeptide: uncharacterized protein (50 aa).

The tract at residues 1-50 (MKTGFWQQVLPKRAGRRKEHPVQYMPHKKEENATGLMNPSLHTSHSAILK) is disordered. The span at 35–50 (GLMNPSLHTSHSAILK) shows a compositional bias: polar residues.

This is an uncharacterized protein from Treponema pallidum (strain Nichols).